The sequence spans 242 residues: Copper transport protein B (242 aa).

Transmembrane regions (helical) follow at residues isoleucine 8 to leucine 28 and isoleucine 86 to tyrosine 106. The segment at glutamate 153 to arginine 175 is disordered. The segment covering serine 154 to serine 169 has biased composition (polar residues). Transmembrane regions (helical) follow at residues isoleucine 187–phenylalanine 207 and tyrosine 210–glycine 230.

The protein belongs to the copper transporter (Ctr) (TC 1.A.56) family. SLC31A subfamily.

The protein resides in the membrane. Its function is as follows. Transporter that is probably involved in the transport of copper, even if it does not act as a major copper transporter. This chain is Copper transport protein B, found in Aspergillus fumigatus (strain ATCC MYA-4609 / CBS 101355 / FGSC A1100 / Af293) (Neosartorya fumigata).